Reading from the N-terminus, the 305-residue chain is Major fimbrium anchoring subunit FimB (305 aa).

Positions 1–22 (MNDAKKYIVSVLILLVAGMFGG) are cleaved as a signal peptide. Cys-23 carries the N-palmitoyl cysteine lipid modification. The S-diacylglycerol cysteine moiety is linked to residue Cys-23.

Belongs to the bacteroidetes fimbrillin superfamily. FimB/Mfa2 family. FimB is not part of the fimbrium itself, but anchors the fimbrium in the outer membrane. Linear, head-to-tail oligomerization of fimbrial subunits mediates assembly of the fimbrium stalk, while the minor components FimC, FimD and FimE probably form the fimbrium tip. The anchoring subunit FimB limits fimbrium length and is important for solid fimbrium attachment to the outer membrane. In its absence, the major fimbriae become very long and are easily detached from the membrane.

It localises to the cell outer membrane. Its function is as follows. Anchoring subunit of the major fimbriae. Regulates fimbrial length. These filamentous pili are attached to the cell surface; they mediate biofilm formation, adhesion onto host cells and onto other bacteria that are part of the oral microbiome. Fimbriae of P.gingivalis are major virulence factors. The protein is Major fimbrium anchoring subunit FimB of Porphyromonas gingivalis (Bacteroides gingivalis).